Reading from the N-terminus, the 361-residue chain is MKDSVIRKLEGLLERNEEVLALLSDASIIADQERFRALSKEYSQLEDVVRTFKSYQQAEEDFESAKEMMEEDDPELKEMAQEEYKATKEAIATLEAELQILLLPKDPNDDNNCFIEIRAGAGGDEAAIFAGDLFRMYSRYAESKRWQIEVMNTNEGEHGGFKEVIAKISGEGVYGKLKFESGGHRVQRVPETESQGRVHTSACTVIVLPEVPEAEAIEINKADLKVDTFRASGAGGQHVNKTDSAIRITHIPTGIVVECQDQRSQHKNRAQAMSVLAARIQAVEDEKRRSAEESTRRNLVSSGDRSERIRTYNYPQGRVSEHRINLTLYRLNEFMEGDIDCVVEPLIQENQADMLAALGEA.

Gln237 is modified (N5-methylglutamine). Over residues 285 to 296 the composition is skewed to basic and acidic residues; sequence DEKRRSAEESTR. The disordered stretch occupies residues 285–305; the sequence is DEKRRSAEESTRRNLVSSGDR.

Belongs to the prokaryotic/mitochondrial release factor family. In terms of processing, methylated by PrmC. Methylation increases the termination efficiency of RF1.

The protein resides in the cytoplasm. Peptide chain release factor 1 directs the termination of translation in response to the peptide chain termination codons UAG and UAA. The protein is Peptide chain release factor 1 of Shewanella halifaxensis (strain HAW-EB4).